The following is a 100-amino-acid chain: RxLR effector protein PITG_18683 (100 aa).

The signal sequence occupies residues 1–22 (MRSFLYGILAFAVLARSSAVAA). The RxLR-dEER motif lies at 43 to 57 (RSLRVEAQEVIQSGR). Residues 78–82 (KPDIK) carry the Calmodulin-binding motif motif.

Belongs to the RxLR effector family. As to quaternary structure, interacts with the host calmodulin.

Its subcellular location is the secreted. The protein localises to the host cell. Functionally, secreted effector that associates with calmodulin to interfere with plant defense-associated calcium signaling in hosts. In Phytophthora infestans (strain T30-4) (Potato late blight agent), this protein is RxLR effector protein PITG_18683.